Here is a 383-residue protein sequence, read N- to C-terminus: L-lactate dehydrogenase (383 aa).

Residues 1–380 (MIISSGNDYR…NADCLVQAIK (380 aa)) enclose the FMN hydroxy acid dehydrogenase domain. Tyr-24 contributes to the substrate binding site. Ser-106 and Gln-127 together coordinate FMN. Tyr-129 serves as a coordination point for substrate. Position 155 (Thr-155) interacts with FMN. Arg-164 contacts substrate. Lys-251 contributes to the FMN binding site. His-275 acts as the Proton acceptor in catalysis. Arg-278 is a substrate binding site. 306–330 (DSGIRNGLDVVRMLALGADTVLLGR) is an FMN binding site.

This sequence belongs to the FMN-dependent alpha-hydroxy acid dehydrogenase family. FMN serves as cofactor.

The protein localises to the cell inner membrane. The catalysed reaction is (S)-lactate + A = pyruvate + AH2. Functionally, catalyzes the conversion of L-lactate to pyruvate. Is coupled to the respiratory chain. The polypeptide is L-lactate dehydrogenase (Acinetobacter baumannii (strain AB307-0294)).